The chain runs to 224 residues: ATP synthase subunit a (224 aa).

6 helical membrane-spanning segments follow: residues 17–37 (FIYM…VKMA), 78–98 (LVAT…VPGF), 104–124 (FLEF…YEGI), 136–156 (FLGP…VSHF), 176–196 (FLMV…YALL), and 201–221 (FLQA…AIAV).

This sequence belongs to the ATPase A chain family. In terms of assembly, F-type ATPases have 2 components, CF(1) - the catalytic core - and CF(0) - the membrane proton channel. CF(1) has five subunits: alpha(3), beta(3), gamma(1), delta(1), epsilon(1). CF(0) has three main subunits: a(1), b(2) and c(9-12). The alpha and beta chains form an alternating ring which encloses part of the gamma chain. CF(1) is attached to CF(0) by a central stalk formed by the gamma and epsilon chains, while a peripheral stalk is formed by the delta and b chains.

The protein localises to the cell inner membrane. Functionally, key component of the proton channel; it plays a direct role in the translocation of protons across the membrane. This is ATP synthase subunit a from Sulfurimonas denitrificans (strain ATCC 33889 / DSM 1251) (Thiomicrospira denitrificans (strain ATCC 33889 / DSM 1251)).